We begin with the raw amino-acid sequence, 189 residues long: Protein GrpE (189 aa).

Residues 1–21 (MADEQNLDNQNPETPEQSQAD) form a disordered region. Polar residues predominate over residues 7–20 (LDNQNPETPEQSQA).

The protein belongs to the GrpE family. In terms of assembly, homodimer.

The protein localises to the cytoplasm. Participates actively in the response to hyperosmotic and heat shock by preventing the aggregation of stress-denatured proteins, in association with DnaK and GrpE. It is the nucleotide exchange factor for DnaK and may function as a thermosensor. Unfolded proteins bind initially to DnaJ; upon interaction with the DnaJ-bound protein, DnaK hydrolyzes its bound ATP, resulting in the formation of a stable complex. GrpE releases ADP from DnaK; ATP binding to DnaK triggers the release of the substrate protein, thus completing the reaction cycle. Several rounds of ATP-dependent interactions between DnaJ, DnaK and GrpE are required for fully efficient folding. The protein is Protein GrpE of Stutzerimonas stutzeri (strain A1501) (Pseudomonas stutzeri).